The primary structure comprises 244 residues: Uridylate kinase (244 aa).

Residue 19–22 (KVSG) coordinates ATP. Residues 27–32 (GERGFG) are involved in allosteric activation by GTP. Gly61 serves as a coordination point for UMP. ATP contacts are provided by Gly62 and Arg66. UMP contacts are provided by residues Asp80 and 141 to 148 (IGSPFFTT). The ATP site is built by Thr168, Gln169, Tyr174, and Asp177.

This sequence belongs to the UMP kinase family. Homohexamer.

It is found in the cytoplasm. The enzyme catalyses UMP + ATP = UDP + ADP. It participates in pyrimidine metabolism; CTP biosynthesis via de novo pathway; UDP from UMP (UMPK route): step 1/1. Allosterically activated by GTP. Inhibited by UTP. In terms of biological role, catalyzes the reversible phosphorylation of UMP to UDP. The protein is Uridylate kinase of Anaplasma phagocytophilum (strain HZ).